The primary structure comprises 512 residues: Cytochrome P450 monooxygenase cheE (512 aa).

Residues 5-27 (YFAAESSWSPYVILVLALAAMVA) traverse the membrane as a helical segment. N-linked (GlcNAc...) asparagine glycans are attached at residues Asn53, Asn124, and Asn168. Heme is bound at residue Cys455. N-linked (GlcNAc...) asparagine glycosylation is found at Asn499 and Asn508.

Belongs to the cytochrome P450 family. The cofactor is heme.

The protein resides in the membrane. Its pathway is secondary metabolite biosynthesis. Its function is as follows. Cytochrome P450 monooxygenase; part of the gene cluster that mediates the biosynthesis of chaetoglobosin A which has a unique inhibitory activity against actin polymerization in mammalian cells. Chaetoglobosin A and its intermediates are involved in the morphological differentiation of C.globosum. The first step of the pathway is the synthesis of prochaetoglobosin I via condensation of one acetyl-CoA, 8 malonyl-CoA, and a L-tryptophan molecule by the PKS-NRPS hybrid synthetase cheA, followed by reduction of backbone double bond to install desired geometry by the enoyl reductase cheB. Further multiple oxidation steps performed by the cytochrome P450 monooxygenases cheE and cheG, as well as by the FAD-linked oxidoreductase cheF, lead to the formation of chaetoglobosin A. Depending on the order of action of these reductases, distinct intermediates can be identified. Within the pathway, the cytochrome P450 monooxygenase cheE catalyzes a stereospecific epoxidation on prochaetoglobosin I, cytoglobosin D, and chaetoglobosin J intermediates. The FAD-linked oxidoreductase cheF performs dehydrogenation of the C-20 hydroxyl groups in the 20-dihyrochaetoglobosin A and cytoglobosin D intermediates. Finally, the cytochrome P450 monooxygenase cheG can catalyze the stereospecific dihydroxylation of prochaetoglobosin I and prochaetoglobosin IV at C-19 and C-20, respectively. The Diels-Alderase cheD may play a role in the post-PKS-NRPS biosynthetic steps catalyzing Diels-Alder cyclization. The chain is Cytochrome P450 monooxygenase cheE from Chaetomium globosum (strain ATCC 6205 / CBS 148.51 / DSM 1962 / NBRC 6347 / NRRL 1970) (Soil fungus).